A 367-amino-acid chain; its full sequence is Aminomethyltransferase (367 aa).

The protein belongs to the GcvT family. In terms of assembly, the glycine cleavage system is composed of four proteins: P, T, L and H.

The catalysed reaction is N(6)-[(R)-S(8)-aminomethyldihydrolipoyl]-L-lysyl-[protein] + (6S)-5,6,7,8-tetrahydrofolate = N(6)-[(R)-dihydrolipoyl]-L-lysyl-[protein] + (6R)-5,10-methylene-5,6,7,8-tetrahydrofolate + NH4(+). Functionally, the glycine cleavage system catalyzes the degradation of glycine. This is Aminomethyltransferase from Parasynechococcus marenigrum (strain WH8102).